We begin with the raw amino-acid sequence, 326 residues long: MDIYDDKGLQTIKLFNNEFDCIRNDIRELFKHVTDSDSIQLPMEDNSDIIENIRKILYRRLKNVECVDIDSTITFMKYDPNDDNKRTCSNWVPLTNNYMEYCLVIYLETPICGGKIKLYHPTGNIKSDKDIMFAKTLDFKSTKVLTGRKTIAVLDISVSYNRSMTTIHYNDDVDIDIHTDKNGKELCYCYITIDDHYLVDVETIGVIVNRSGKCLLVNNHLGIGIVKDKRISDSFGDVCMDTIFDFSEARELFSLTNDDNRNIAWDDDTDIWTPVTEDDYKFLSRLVLYAKSQSDTVFDYYVLTGDTEPPTVFIFKVTRFYFNMPK.

This sequence belongs to the poxviridae C4/C10 protein family.

This chain is Protein C10, found in Homo sapiens (Human).